The following is a 243-amino-acid chain: Vesicle-associated membrane protein-associated protein B (243 aa).

An N-acetylalanine modification is found at Ala2. The Cytoplasmic portion of the chain corresponds to 2 to 218; the sequence is AKVEQVLSLE…PAPATPGKEE (217 aa). The region spanning 7–124 is the MSP domain; it reads VLSLEPQHEL…MDSKLRCVFE (118 aa). The residue at position 146 (Ser146) is a Phosphoserine. A Glycyl lysine isopeptide (Lys-Gly) (interchain with G-Cter in SUMO1) cross-link involves residue Lys147. A Phosphothreonine modification is found at Thr150. Phosphoserine occurs at positions 158 and 159. A coiled-coil region spans residues 161–196; the sequence is LDDTEVKKVMEECKRLQSEVQRLREENKQLKEEDGL. Residues 185 to 197 are compositionally biased toward basic and acidic residues; that stretch reads EENKQLKEEDGLR. A disordered region spans residues 185–217; sequence EENKQLKEEDGLRMRKPVLSNSPAPAPATPGKE. Phosphoserine is present on Ser206. Residues 219–239 traverse the membrane as a helical; Anchor for type IV membrane protein segment; it reads GLSTRLLALVVLFFIVGVIIG.

The protein belongs to the VAMP-associated protein (VAP) (TC 9.B.17) family. In terms of assembly, homodimer, and heterodimer with VAPA. Interacts with VAMP1 and VAMP2. Interacts (via MSP domain) with ZFYVE27. Interacts with RMDN3. Interacts with KIF5A in a ZFYVE27-dependent manner. Interacts (via MSP domain) with STARD3 (via phospho-FFAT motif). Interacts with STARD3NL (via FFAT motif). Interacts with CERT1. Interacts with PLEKHA3 and SACM1L to form a ternary complex. Interacts with VPS13A (via FFAT motif). Interacts with RB1CC1 (via phosphorylated FFAT motif), MIGA2 (via phosphorylated FFAT motif), RMDN3 (via phosphorylated FFAT motif), OSBPL1A (via FFAT motif), KCNB1 (via phosphorylated FFAT motif) and KCNB2 (via phosphorylated FFAT motif). Interacts (via MSP domain) with WDR44 (via FFAT motif); the interactions connect the endoplasmic reticulum (ER) with the endosomal tubule.

The protein resides in the endoplasmic reticulum membrane. In terms of biological role, endoplasmic reticulum (ER)-anchored protein that mediates the formation of contact sites between the ER and endosomes via interaction with FFAT motif-containing proteins such as STARD3 or WDR44. Interacts with STARD3 in a FFAT motif phosphorylation dependent manner. Via interaction with WDR44 participates in neosynthesized protein export. Participates in the endoplasmic reticulum unfolded protein response (UPR) by inducing ERN1/IRE1 activity. Involved in cellular calcium homeostasis regulation. This chain is Vesicle-associated membrane protein-associated protein B, found in Sus scrofa (Pig).